A 313-amino-acid polypeptide reads, in one-letter code: Alpha/beta-gliadin clone PW8142 (313 aa).

Residues 1 to 20 form the signal peptide; the sequence is MKTFLILALVATTATTAVRV. Residues 22 to 55 are compositionally biased toward low complexity; sequence VPQLQPKNPSQQQPQEQVPLVQQQQFPGQQQQFP. Disordered stretches follow at residues 22 to 122 and 234 to 272; these read VPQL…QQAQ and QQPS…VQPQ. Pro residues-rich tracts occupy residues 56-68 and 78-101; these read PQQP…PFPS and FPQP…PQQP. Low complexity-rich tracts occupy residues 102 to 122 and 234 to 264; these read YPQQ…QQAQ and QQPS…QNPQ.

The protein belongs to the gliadin/glutenin family. Post-translationally, substrate of transglutaminase.

Its function is as follows. Gliadin is the major seed storage protein in wheat. The chain is Alpha/beta-gliadin clone PW8142 from Triticum aestivum (Wheat).